The sequence spans 322 residues: uncharacterized protein (322 aa).

Composition is skewed to basic residues over residues 1–16 (MPGN…KSGT) and 43–61 (LRPH…RRPV). Residues 1–69 (MPGNSRRRGA…PVKRADETET (69 aa)) are disordered. The S-adenosyl-L-methionine site is built by Gly-261, Ile-281, and Leu-290.

It belongs to the class IV-like SAM-binding methyltransferase superfamily. RNA methyltransferase TrmH family.

This is an uncharacterized protein from Mycobacterium bovis (strain BCG / Pasteur 1173P2).